The sequence spans 902 residues: MLYKLLSSYITLTLLFLLLAVGAAIATFIENDFGTASARALVYDHLWYEALLGVLALNLLAVIHRTKLYRFKARFLFHIAFVVILLGAGLTRYLGNEGIMHIREGESASSFLTTKPYLQVTLHEGTSPRTHFFPLEITAWKNRLQKSLPTQSTPLKIALVDSFIHKEGLGVSGYFDLELLHKEKRIKKRFTHNLASSLQKETLWLDDLQVDLAYGPQEIPLPFSLSLKAFELKRYPGSRSPSEYTSHVALVDPSQKVALEETIFMNNTLSYGGYKFFQTSYDMDEKGTILTLNQDPGKEVTYLGYALLFLGLLWNLLDPTSRFRVLLGRIKKDSLSLLLPLCLLSPLASSLYAQSDYLQGYLKEHQKGSQELSKGFGELIVQAKMGRMEPLNTLNREILYKLSGKSSFLGMSADQVVLGMLSNPRAWQGVPLIRVKTKPLQELIGIHPQNRARFNDFFDENSAYKLQKEVERASTLPPSRRGSYENDLLKVDERLNIALMVFQGSLFKLFPLPSDPHHRWLNLKESIFMLEGEEAKTLHQATALLLDSAFERQYFKGIEALQTISFYQYKKGNEVIPSESKLQAELLFNRLEIFPHLTPAYLVLGFLVLLSAFGLLFFPPLASHRVRVSFHLLGWILFALHTLGLLLRAYVSGHAPLSDTYESMLYISWSGMLGALLFFRHSLFALSASILMAGIFLFGAHLSHIDPEITNLVPVLKSFWLTLHVSVITASYGFFGVGAFLGSFALALFILKDHLKTPLDKPIHQLSQINEVSLILGLTLLVIGNFLGGIWANESWGRYWAWDPKETWSYISILLYALILHLRLLRPKHYDYLFSLLSLWGFGSILMTYFGVNFYLAGLHSYAQGDPLPIPLWVYALSLALALLSLIAYPHRHLQNSDKGNS.

The next 10 helical transmembrane spans lie at 9 to 29 (YITLTLLFLLLAVGAAIATFI), 75 to 95 (FLFHIAFVVILLGAGLTRYLG), 300 to 320 (VTYLGYALLFLGLLWNLLDPT), 335 to 355 (LSLLLPLCLLSPLASSLYAQS), 602 to 622 (LVLGFLVLLSAFGLLFFPPLA), 659 to 679 (DTYESMLYISWSGMLGALLFF), 731 to 751 (SYGFFGVGAFLGSFALALFIL), 772 to 792 (VSLILGLTLLVIGNFLGGIWA), 832 to 852 (YLFSLLSLWGFGSILMTYFGV), and 868 to 888 (LPIPLWVYALSLALALLSLIA).

It in the C-terminal section; belongs to the CcmF/CycK/Ccl1/NrfE/CcsA family.

The protein localises to the cell membrane. May play a role in cytochrome c biogenesis and may be required for maturation of the NrfA protein. This Wolinella succinogenes (strain ATCC 29543 / DSM 1740 / CCUG 13145 / JCM 31913 / LMG 7466 / NCTC 11488 / FDC 602W) (Vibrio succinogenes) protein is Protein NrfI (nrfI).